The following is a 244-amino-acid chain: 3-deoxy-manno-octulosonate cytidylyltransferase (244 aa).

The protein belongs to the KdsB family.

It localises to the cytoplasm. The enzyme catalyses 3-deoxy-alpha-D-manno-oct-2-ulosonate + CTP = CMP-3-deoxy-beta-D-manno-octulosonate + diphosphate. It functions in the pathway nucleotide-sugar biosynthesis; CMP-3-deoxy-D-manno-octulosonate biosynthesis; CMP-3-deoxy-D-manno-octulosonate from 3-deoxy-D-manno-octulosonate and CTP: step 1/1. The protein operates within bacterial outer membrane biogenesis; lipopolysaccharide biosynthesis. In terms of biological role, activates KDO (a required 8-carbon sugar) for incorporation into bacterial lipopolysaccharide in Gram-negative bacteria. The chain is 3-deoxy-manno-octulosonate cytidylyltransferase from Rickettsia bellii (strain OSU 85-389).